A 341-amino-acid polypeptide reads, in one-letter code: MATIKDVAKRAGVSTTTVSHVINKTRFVAEETKAAVRAAIKELHYSPSAVARSLKVNHTKSIGLLATSSEAPYFAEIIEAVENSCYAKGYTLVLCNSHNDIGKQRAYLSMLAQKRVDGLLVMCAEYPPELLGMLEDYRSIPMVVMDWGQMHNDFTDTIIDNAFEGGYMAGRYLIERGHRDIGAIPGIQERNTGSGRYLGFLKALKEADITVRNEWVVQGDFEPESGYKAMHQILAQKQRPTAVFCGGDIMAMGAICAADELGLRVPQDISVIGYDNVRHARFFTPALTTIHQPKERLGQSAFSMLLDRITSKREDAHVIEVHPTLIERRSVADGPFRDYRR.

Residues 2 to 56 enclose the HTH lacI-type domain; sequence ATIKDVAKRAGVSTTTVSHVINKTRFVAEETKAAVRAAIKELHYSPSAVARSLKV. A DNA-binding region (H-T-H motif) is located at residues 4 to 23; the sequence is IKDVAKRAGVSTTTVSHVIN. A DNA-binding region spans residues 48-56; sequence SAVARSLKV. 5 residues coordinate hypoxanthine: Tyr73, Arg190, Thr192, Phe221, and Asp275.

As to quaternary structure, homodimer.

It functions in the pathway purine metabolism; purine nucleotide biosynthesis [regulation]. In terms of biological role, is the main repressor of the genes involved in the de novo synthesis of purine nucleotides, regulating purB, purC, purEK, purF, purHD, purL, purMN and guaBA expression. PurR is allosterically activated to bind its cognate DNA by binding the purine corepressors, hypoxanthine or guanine, thereby effecting transcription repression. The chain is HTH-type transcriptional repressor PurR from Pectobacterium atrosepticum (strain SCRI 1043 / ATCC BAA-672) (Erwinia carotovora subsp. atroseptica).